The sequence spans 160 residues: Cytochrome b6-f complex subunit 4 (160 aa).

3 consecutive transmembrane segments (helical) span residues 36 to 56 (LLYM…GLAV), 95 to 115 (LLGV…PFIE), and 131 to 151 (TIFL…TLPI).

The protein belongs to the cytochrome b family. PetD subfamily. In terms of assembly, the 4 large subunits of the cytochrome b6-f complex are cytochrome b6, subunit IV (17 kDa polypeptide, petD), cytochrome f and the Rieske protein, while the 4 small subunits are petG, petL, petM and petN. The complex functions as a dimer.

The protein resides in the plastid. It is found in the chloroplast thylakoid membrane. Functionally, component of the cytochrome b6-f complex, which mediates electron transfer between photosystem II (PSII) and photosystem I (PSI), cyclic electron flow around PSI, and state transitions. The chain is Cytochrome b6-f complex subunit 4 from Staurastrum punctulatum (Green alga).